The chain runs to 295 residues: Small ribosomal subunit protein uS2 (295 aa).

Belongs to the universal ribosomal protein uS2 family.

The chain is Small ribosomal subunit protein uS2 from Rickettsia typhi (strain ATCC VR-144 / Wilmington).